A 260-amino-acid polypeptide reads, in one-letter code: Exosome complex component Rrp4 (260 aa).

The S1 motif domain occupies 59 to 128; that stretch reads NDVVIGIVIV…NSMKVELALR (70 aa). In terms of domain architecture, KH spans 136 to 194; sequence KTGQIVEVEPVKVPRVIGHGGSMISMLKKETNCSIFVGQNGRIWIDGKDDDVELLSKAL.

It belongs to the RRP4 family. In terms of assembly, component of the archaeal exosome complex. Forms a trimer of Rrp4 and/or Csl4 subunits. The trimer associates with a hexameric ring-like arrangement composed of 3 Rrp41-Rrp42 heterodimers.

It is found in the cytoplasm. Functionally, non-catalytic component of the exosome, which is a complex involved in RNA degradation. Increases the RNA binding and the efficiency of RNA degradation. Confers strong poly(A) specificity to the exosome. The polypeptide is Exosome complex component Rrp4 (Methanosarcina barkeri (strain Fusaro / DSM 804)).